Consider the following 257-residue polypeptide: uncharacterized protein (257 aa).

The chain crosses the membrane as a helical span at residues 6–26 (IFWLNLAAIIIISIVVSGDMF).

Belongs to the staphylococcal tandem lipoprotein family.

Its subcellular location is the cell membrane. This is an uncharacterized protein from Staphylococcus aureus (strain NCTC 8325 / PS 47).